The primary structure comprises 260 residues: Myb transcription factor 42 (260 aa).

2 HTH myb-type domains span residues 9 to 61 (KAHT…INYL) and 62 to 116 (RPDL…RRKL). 2 consecutive DNA-binding regions (H-T-H motif) follow at residues 37-61 (WRSL…INYL) and 89-112 (WSLI…NTHI).

In terms of tissue distribution, mainly expressed in the aerial parts and, to a lower extent, in roots.

It localises to the nucleus. Functionally, transcription factor that negatively regulates the expression of caffeic acid O-methyl-transferase genes (COMTs) and of other genes involved in the biosynthesis of lignin, thus preventing lignification. This chain is Myb transcription factor 42, found in Zea mays (Maize).